We begin with the raw amino-acid sequence, 718 residues long: Ribosomal RNA large subunit methyltransferase K/L (718 aa).

The 112-residue stretch at 43-154 (TQYRILLWSR…QDELVVSLDL (112 aa)) folds into the THUMP domain.

It belongs to the methyltransferase superfamily. RlmKL family.

Its subcellular location is the cytoplasm. The enzyme catalyses guanosine(2445) in 23S rRNA + S-adenosyl-L-methionine = N(2)-methylguanosine(2445) in 23S rRNA + S-adenosyl-L-homocysteine + H(+). It carries out the reaction guanosine(2069) in 23S rRNA + S-adenosyl-L-methionine = N(2)-methylguanosine(2069) in 23S rRNA + S-adenosyl-L-homocysteine + H(+). Functionally, specifically methylates the guanine in position 2445 (m2G2445) and the guanine in position 2069 (m7G2069) of 23S rRNA. The sequence is that of Ribosomal RNA large subunit methyltransferase K/L from Histophilus somni (strain 2336) (Haemophilus somnus).